The sequence spans 472 residues: 2-methylcitrate synthase, mitochondrial (472 aa).

The N-terminal 29 residues, 1–29 (MALNLTSSRRALGSLKPLTRAAFSGVRGY), are a transit peptide targeting the mitochondrion. Residues Arg-75 and Lys-193 each coordinate CoA. His-271 is a binding site for oxaloacetate. Leu-306 serves as a coordination point for CoA. His-307 is a catalytic residue. CoA contacts are provided by Val-348, Gly-350, and Tyr-351. Oxaloacetate-binding residues include His-353 and Arg-362. Residue His-353 is part of the active site. Residues Thr-402, Lys-403, and Asn-408 each contribute to the CoA site. The active site involves Asp-410. The oxaloacetate site is built by Arg-436 and Arg-456.

It belongs to the citrate synthase family. In terms of assembly, homodimer.

Its subcellular location is the mitochondrion matrix. The enzyme catalyses propanoyl-CoA + oxaloacetate + H2O = (2S,3S)-2-methylcitrate + CoA + H(+). The catalysed reaction is oxaloacetate + acetyl-CoA + H2O = citrate + CoA + H(+). It participates in organic acid metabolism; propanoate degradation. Component of the methylcitrate cycle that catalyzes the synthesis of (2S,3S)-2-methylcitrate from propionyl-CoA and oxaloacetate. Plays an important role in detoxification of propionyl-CoA, an inhibitor of both primary and secondary metabolism. Also has citrate synthase activity using as substrates acetyl-CoA and oxaloacetate. In Gibberella moniliformis (Maize ear and stalk rot fungus), this protein is 2-methylcitrate synthase, mitochondrial.